The chain runs to 84 residues: Small ribosomal subunit protein uS17 (84 aa).

The protein belongs to the universal ribosomal protein uS17 family. As to quaternary structure, part of the 30S ribosomal subunit.

One of the primary rRNA binding proteins, it binds specifically to the 5'-end of 16S ribosomal RNA. This is Small ribosomal subunit protein uS17 from Yersinia enterocolitica serotype O:8 / biotype 1B (strain NCTC 13174 / 8081).